The chain runs to 190 residues: dTTP/UTP pyrophosphatase (190 aa).

The Proton acceptor role is filled by D71.

Belongs to the Maf family. YhdE subfamily. A divalent metal cation serves as cofactor.

It is found in the cytoplasm. It carries out the reaction dTTP + H2O = dTMP + diphosphate + H(+). The catalysed reaction is UTP + H2O = UMP + diphosphate + H(+). Its function is as follows. Nucleoside triphosphate pyrophosphatase that hydrolyzes dTTP and UTP. May have a dual role in cell division arrest and in preventing the incorporation of modified nucleotides into cellular nucleic acids. This is dTTP/UTP pyrophosphatase from Xanthomonas campestris pv. campestris (strain ATCC 33913 / DSM 3586 / NCPPB 528 / LMG 568 / P 25).